A 156-amino-acid chain; its full sequence is Small ribosomal subunit protein uS7 (156 aa).

It belongs to the universal ribosomal protein uS7 family. As to quaternary structure, part of the 30S ribosomal subunit. Contacts proteins S9 and S11.

Its function is as follows. One of the primary rRNA binding proteins, it binds directly to 16S rRNA where it nucleates assembly of the head domain of the 30S subunit. Is located at the subunit interface close to the decoding center, probably blocks exit of the E-site tRNA. In Glaesserella parasuis serovar 5 (strain SH0165) (Haemophilus parasuis), this protein is Small ribosomal subunit protein uS7.